The chain runs to 764 residues: Phenylalanine--tRNA ligase beta subunit (764 aa).

One can recognise a tRNA-binding domain in the interval 38–148 (CIAPKNVVVG…GELVLGKELN (111 aa)). Positions 375–455 (LKDRTLTFQL…RFVGIDNLVS (81 aa)) constitute a B5 domain. Residues aspartate 433, aspartate 439, glutamate 442, and glutamate 443 each coordinate Mg(2+). One can recognise an FDX-ACB domain in the interval 673-763 (SIYPSSVRDL…LEKEFNARLK (91 aa)).

Belongs to the phenylalanyl-tRNA synthetase beta subunit family. Type 1 subfamily. As to quaternary structure, tetramer of two alpha and two beta subunits. Requires Mg(2+) as cofactor.

The protein resides in the cytoplasm. The enzyme catalyses tRNA(Phe) + L-phenylalanine + ATP = L-phenylalanyl-tRNA(Phe) + AMP + diphosphate + H(+). This is Phenylalanine--tRNA ligase beta subunit (pheT) from Helicobacter pylori (strain ATCC 700392 / 26695) (Campylobacter pylori).